We begin with the raw amino-acid sequence, 296 residues long: Nucleotide-binding protein Spy49_0545 (296 aa).

13–20 (GMSGAGKT) contributes to the ATP binding site. 63–66 (DMRS) is a binding site for GTP.

The protein belongs to the RapZ-like family.

Functionally, displays ATPase and GTPase activities. This is Nucleotide-binding protein Spy49_0545 from Streptococcus pyogenes serotype M49 (strain NZ131).